Reading from the N-terminus, the 255-residue chain is 2,3-dehydroadipyl-CoA hydratase (255 aa).

The protein belongs to the enoyl-CoA hydratase/isomerase family.

It carries out the reaction a (3S)-3-hydroxyacyl-CoA = a (2E)-enoyl-CoA + H2O. It catalyses the reaction a 4-saturated-(3S)-3-hydroxyacyl-CoA = a (3E)-enoyl-CoA + H2O. The protein operates within aromatic compound metabolism; phenylacetate degradation. Functionally, catalyzes the reversible conversion of enzymatically produced 2,3-dehydroadipyl-CoA into 3-hydroxyadipyl-CoA. The protein is 2,3-dehydroadipyl-CoA hydratase (paaF) of Escherichia coli (strain K12).